We begin with the raw amino-acid sequence, 424 residues long: Set1 complex component spp1 (424 aa).

The segment at 80-108 (QQPTIPKKPPVSAHRRGPRKHRGNANSQL) is disordered. Positions 92–102 (AHRRGPRKHRG) are enriched in basic residues. The PHD-type zinc finger occupies 118–168 (PLYCICQKPDDGSWMLGCDGCEDWFHGTCVNIPESYNDLTVQYFCPKCTEE).

As to quaternary structure, component of the Set1 complex composed of ash2, sdc1, set1, shg1, spp1, swd1, swd2 and swd3.

Its subcellular location is the nucleus. The Set1 complex specifically methylates 'Lys-4' of histone H3. This Schizosaccharomyces pombe (strain 972 / ATCC 24843) (Fission yeast) protein is Set1 complex component spp1 (spp1).